Here is a 353-residue protein sequence, read N- to C-terminus: Rhodopsin (353 aa).

Over 1-36 (MNGTEGENFYIPFSNKTGLARSPFEYPQYYLAEPWK) the chain is Extracellular. N-linked (GlcNAc...) asparagine glycans are attached at residues asparagine 2 and asparagine 15. The chain crosses the membrane as a helical span at residues 37-61 (YSVLAAYMFFLILVGFPVNFLTLFV). Residues 62–73 (TVQHKKLRTPLN) lie on the Cytoplasmic side of the membrane. Residues 74 to 96 (YILLNLAVANLFMVLFGFTLTMY) traverse the membrane as a helical segment. The Extracellular segment spans residues 97–110 (SSMNGYFVFGPTMC). A disulfide bond links cysteine 110 and cysteine 187. Residues 111 to 133 (NFEGFFATLGGEMSLWSLVVLAI) traverse the membrane as a helical segment. The 'Ionic lock' involved in activated form stabilization motif lies at 134-136 (ERY). Over 134 to 152 (ERYIVICKPMGNFRFGSTH) the chain is Cytoplasmic. Residues 153–173 (AYMGVAFTWFMALSCAAPPLV) traverse the membrane as a helical segment. The Extracellular portion of the chain corresponds to 174-202 (GWSRYLPEGMQCSCGPDYYTLNPNFNNES). A helical membrane pass occupies residues 203–224 (FVIYMFLVHFIIPFIVIFFCYG). The Cytoplasmic segment spans residues 225–252 (RLLCTVKEAAAAQQESASTQKAEKEVTR). The chain crosses the membrane as a helical span at residues 253-274 (MVVLMVIGFLVCWVPYASVAFY). Topologically, residues 275-286 (IFTHQGSDFGAT) are extracellular. The chain crosses the membrane as a helical span at residues 287-308 (FMTVPAFFAKTSALYNPIIYIL). Lysine 296 is subject to N6-(retinylidene)lysine. Topologically, residues 309–353 (MNKQFRNCMITTLCCGKNPLGDEDSGASTSKTEVSSVSTSQVSPA) are cytoplasmic. The disordered stretch occupies residues 330 to 353 (DEDSGASTSKTEVSSVSTSQVSPA). Low complexity predominate over residues 336–353 (STSKTEVSSVSTSQVSPA).

This sequence belongs to the G-protein coupled receptor 1 family. Opsin subfamily. Post-translationally, phosphorylated on some or all of the serine and threonine residues present in the C-terminal region. Contains one covalently linked retinal chromophore.

It localises to the membrane. The protein localises to the cell projection. It is found in the cilium. Its subcellular location is the photoreceptor outer segment. Functionally, photoreceptor required for image-forming vision at low light intensity. While most salt water fish species use retinal as chromophore, most freshwater fish use 3-dehydroretinal, or a mixture of retinal and 3-dehydroretinal. Light-induced isomerization of 11-cis to all-trans retinal triggers a conformational change that activates signaling via G-proteins. Subsequent receptor phosphorylation mediates displacement of the bound G-protein alpha subunit by arrestin and terminates signaling. The protein is Rhodopsin (RHO) of Petromyzon marinus (Sea lamprey).